The sequence spans 274 residues: Ubiquinone biosynthesis O-methyltransferase, mitochondrial (274 aa).

The transit peptide at 1-30 (MNSMNILNKVKNVKSYTRLVRQGFLSQQRN) directs the protein to the mitochondrion. 4 residues coordinate S-adenosyl-L-methionine: Arg65, Gly88, Asp109, and Met154. Mg(2+) contacts are provided by Glu155, Glu158, and His159.

The protein belongs to the class I-like SAM-binding methyltransferase superfamily. UbiG/COQ3 family. Component of a multi-subunit COQ enzyme complex, composed of at least coq3, coq4, coq5, coq6, coq7 and coq9. Mg(2+) serves as cofactor.

Its subcellular location is the mitochondrion inner membrane. The catalysed reaction is 3,4-dihydroxy-5-(all-trans-decaprenyl)benzoate + S-adenosyl-L-methionine = 4-hydroxy-3-methoxy-5-(all-trans-decaprenyl)benzoate + S-adenosyl-L-homocysteine + H(+). The enzyme catalyses a 3-demethylubiquinone + S-adenosyl-L-methionine = a ubiquinone + S-adenosyl-L-homocysteine. It carries out the reaction 3-demethylubiquinol-10 + S-adenosyl-L-methionine = ubiquinol-10 + S-adenosyl-L-homocysteine + H(+). The protein operates within cofactor biosynthesis; ubiquinone biosynthesis. Functionally, O-methyltransferase required for two non-consecutive steps during ubiquinone biosynthesis. Catalyzes the 2 O-methylation of 3,4-dihydroxy-5-(all-trans-decaprenyl)benzoic acid into 4-hydroxy-3-methoxy-5-(all-trans-decaprenyl)benzoic acid. Also catalyzes the last step of ubiquinone biosynthesis by mediating methylation of 3-demethylubiquinone into ubiquinone. Also able to mediate the methylation of 3-demethylubiquinol-10 into ubiquinol-10. The polypeptide is Ubiquinone biosynthesis O-methyltransferase, mitochondrial (Schizosaccharomyces pombe (strain 972 / ATCC 24843) (Fission yeast)).